The following is a 707-amino-acid chain: MLLSVFIILINTLFVLAIPPKEGSDNNPSKKYLVTDLPGLYENVKPKISVPLMFSGQLELYPENNTHYFFWKFVDSELNQDTSKKTIFWLNGGPGCSSMDGALLETGPFRIDENEKVIYNNGSWHKFGDIIYVDQPAGTGFSFTNEYITDLDQVAWYFLKFMEEYYKLFPNEINNEIYFAGESYAGQYIPYIADAILKRNKNLKENDVKYDLKGILIGNGWVSPNQQSLSYLPFFINHGLIDKSHPRWGSLLSKHEKCQKIVNKIDGHFDEADVHPYEVNSATCESILTDLLNYSQDRESDSDHRCINMYDYTLRDSYPSCGMNWPFELKYVAPFLRKEEVMHDLNLVDLKYWRECSGKVGRMFGARNSLPAVHLLPNISQEIPIILFNGANDIICNSDGVLSYLDKLQWGGKVGFTNKDDQINWIYDNKEVGYILMERNISFINIYNSSHMVPYDLPDVSRALMDLVSGKYEEKEKDGKREFITYPLGEVRNKLGQEIPADESSKPIEDKPDDKPIEDKPEETKPEQTKPEDETSSSTSEIIPTSEASFIPEPEESTSSKFTRLIQLGVIFIIFWGVYILYVSYRARPSSIIKKPARSTNSSGRKKNVQWADQLNRFEEDENELGSPPPQGIIAKTISKITGNTSNRGRYAPAGDGSREFTDDIELGEGISDPNVDEFIIGSDDDEDDDEDVETHEGNPKKTESKS.

The N-terminal stretch at 1–17 is a signal peptide; the sequence is MLLSVFIILINTLFVLA. At 18–564 the chain is on the lumenal side; sequence IPPKEGSDNN…EESTSSKFTR (547 aa). N-linked (GlcNAc...) asparagine glycans are attached at residues Asn64 and Asn121. Ser183 is an active-site residue. N-linked (GlcNAc...) asparagine glycosylation is found at Asn293 and Asn378. Asp393 is a catalytic residue. Asn440 and Asn448 each carry an N-linked (GlcNAc...) asparagine glycan. The active site involves His451. The segment at 496–557 is disordered; that stretch reads GQEIPADESS…ASFIPEPEES (62 aa). Residues 503-533 show a composition bias toward basic and acidic residues; it reads ESSKPIEDKPDDKPIEDKPEETKPEQTKPED. Residues 536-549 show a composition bias toward low complexity; that stretch reads SSSTSEIIPTSEAS. Residues 565–585 traverse the membrane as a helical segment; it reads LIQLGVIFIIFWGVYILYVSY. Residues 586–707 are Cytoplasmic-facing; the sequence is RARPSSIIKK…GNPKKTESKS (122 aa). The tract at residues 644–707 is disordered; the sequence is NTSNRGRYAP…GNPKKTESKS (64 aa). The segment covering 683-694 has biased composition (acidic residues); that stretch reads SDDDEDDDEDVE. The segment covering 695–707 has biased composition (basic and acidic residues); the sequence is THEGNPKKTESKS.

It belongs to the peptidase S10 family.

It is found in the golgi apparatus. The protein localises to the trans-Golgi network membrane. It catalyses the reaction Preferential release of a C-terminal arginine or lysine residue.. Its function is as follows. Protease with a carboxypeptidase B-like function involved in the C-terminal processing of the lysine and arginine residues from protein precursors. Promotes cell fusion and is involved in the programmed cell death. This Candida tropicalis (strain ATCC MYA-3404 / T1) (Yeast) protein is Pheromone-processing carboxypeptidase KEX1 (KEX1).